The primary structure comprises 269 residues: Myelin protein zero-like protein 1 (269 aa).

The signal sequence occupies residues 1-35 (MAAPAGAGALIASPDRRRCLWSVLAAALGLLTYGV). The region spanning 36–146 (SALEVYTPKE…VKNPPDIVVQ (111 aa)) is the Ig-like V-type domain. Over 36 to 162 (SALEVYTPKE…YVVEKEILPA (127 aa)) the chain is Extracellular. N-linked (GlcNAc...) asparagine glycosylation is found at asparagine 50, asparagine 64, and asparagine 130. Cysteines 58 and 135 form a disulfide. The chain crosses the membrane as a helical span at residues 163–183 (FPVWVVVGIVTAVVLGLTLLI). Topologically, residues 184–269 (TMILAVIYRR…SVVYADIRKN (86 aa)) are cytoplasmic. Residues 202 to 238 (GCNTSENVSPVKQVSRKSPSDTEGLVKSLPSGSHQGP) form a disordered region. Over residues 203 to 213 (CNTSENVSPVK) the composition is skewed to polar residues. Residues serine 206, serine 210, serine 219, and serine 221 each carry the phosphoserine modification. The ITIM motif 1 signature appears at 239–244 (VIYAQL). Tyrosine 241 carries the post-translational modification Phosphotyrosine. Phosphoserine is present on serine 260. Residues 261-266 (VVYADI) carry the ITIM motif 2 motif. Residue tyrosine 263 is modified to Phosphotyrosine.

Belongs to the myelin P0 protein family. Interacts with phosphorylated PTPN11/SHP-2. In terms of processing, phosphorylated on tyrosine residues upon stimulation with pervanadate and concanavalin-A (ConA). Phosphorylation at Tyr-241 and Tyr-263 is required for interaction with PTPN11/SHP-2. Dephosphorylated by PTPN11/SHP-2 (in vitro). N-glycosylated.

It localises to the membrane. Cell surface receptor, which is involved in signal transduction processes. Recruits PTPN11/SHP-2 to the cell membrane and is a putative substrate of PTPN11/SHP-2. Is a major receptor for concanavalin-A (ConA) and is involved in cellular signaling induced by ConA, which probably includes Src family tyrosine-protein kinases. May be involved in regulation of integrin-mediated cell motility. This is Myelin protein zero-like protein 1 (MPZL1) from Bos taurus (Bovine).